Here is a 239-residue protein sequence, read N- to C-terminus: Carboxy-S-adenosyl-L-methionine synthase (239 aa).

Residues Y35, 64–66 (GCS), 88–89 (DN), and R195 contribute to the S-adenosyl-L-methionine site.

The protein belongs to the class I-like SAM-binding methyltransferase superfamily. Cx-SAM synthase family. As to quaternary structure, homodimer.

The enzyme catalyses prephenate + S-adenosyl-L-methionine = carboxy-S-adenosyl-L-methionine + 3-phenylpyruvate + H2O. Catalyzes the conversion of S-adenosyl-L-methionine (SAM) to carboxy-S-adenosyl-L-methionine (Cx-SAM). The chain is Carboxy-S-adenosyl-L-methionine synthase from Helicobacter pylori (strain Shi470).